The following is an 870-amino-acid chain: DNA-directed RNA polymerase subunit Rpo1N (870 aa).

Positions 60, 63, 70, 73, 100, 103, 146, and 149 each coordinate Zn(2+). Asp451, Asp453, and Asp455 together coordinate Mg(2+).

Belongs to the RNA polymerase beta' chain family. In terms of assembly, part of the RNA polymerase complex. It depends on Mg(2+) as a cofactor. The cofactor is Zn(2+).

It is found in the cytoplasm. The catalysed reaction is RNA(n) + a ribonucleoside 5'-triphosphate = RNA(n+1) + diphosphate. Functionally, DNA-dependent RNA polymerase (RNAP) catalyzes the transcription of DNA into RNA using the four ribonucleoside triphosphates as substrates. Forms the clamp head domain. The polypeptide is DNA-directed RNA polymerase subunit Rpo1N (Methanothermobacter thermautotrophicus (strain ATCC 29096 / DSM 1053 / JCM 10044 / NBRC 100330 / Delta H) (Methanobacterium thermoautotrophicum)).